Reading from the N-terminus, the 335-residue chain is Acetyl-coenzyme A carboxylase carboxyl transferase subunit alpha (335 aa).

Residues 48 to 308 (TLEKKVDALR…KGMLIEELKA (261 aa)) enclose the CoA carboxyltransferase C-terminal domain.

This sequence belongs to the AccA family. In terms of assembly, acetyl-CoA carboxylase is a heterohexamer composed of biotin carboxyl carrier protein (AccB), biotin carboxylase (AccC) and two subunits each of ACCase subunit alpha (AccA) and ACCase subunit beta (AccD).

The protein resides in the cytoplasm. The catalysed reaction is N(6)-carboxybiotinyl-L-lysyl-[protein] + acetyl-CoA = N(6)-biotinyl-L-lysyl-[protein] + malonyl-CoA. It participates in lipid metabolism; malonyl-CoA biosynthesis; malonyl-CoA from acetyl-CoA: step 1/1. Its function is as follows. Component of the acetyl coenzyme A carboxylase (ACC) complex. First, biotin carboxylase catalyzes the carboxylation of biotin on its carrier protein (BCCP) and then the CO(2) group is transferred by the carboxyltransferase to acetyl-CoA to form malonyl-CoA. This chain is Acetyl-coenzyme A carboxylase carboxyl transferase subunit alpha, found in Chlorobium luteolum (strain DSM 273 / BCRC 81028 / 2530) (Pelodictyon luteolum).